The following is a 945-amino-acid chain: Isoleucine--tRNA ligase (945 aa).

The 'HIGH' region signature appears at 66–76 (PYANGDIHLGH). Residue Glu-581 participates in L-isoleucyl-5'-AMP binding. Positions 622–626 (KMSKS) match the 'KMSKS' region motif. Residue Lys-625 coordinates ATP. Positions 908, 911, 928, and 931 each coordinate Zn(2+).

It belongs to the class-I aminoacyl-tRNA synthetase family. IleS type 1 subfamily. In terms of assembly, monomer. Zn(2+) serves as cofactor.

It is found in the cytoplasm. The enzyme catalyses tRNA(Ile) + L-isoleucine + ATP = L-isoleucyl-tRNA(Ile) + AMP + diphosphate. Its function is as follows. Catalyzes the attachment of isoleucine to tRNA(Ile). As IleRS can inadvertently accommodate and process structurally similar amino acids such as valine, to avoid such errors it has two additional distinct tRNA(Ile)-dependent editing activities. One activity is designated as 'pretransfer' editing and involves the hydrolysis of activated Val-AMP. The other activity is designated 'posttransfer' editing and involves deacylation of mischarged Val-tRNA(Ile). The polypeptide is Isoleucine--tRNA ligase (Burkholderia lata (strain ATCC 17760 / DSM 23089 / LMG 22485 / NCIMB 9086 / R18194 / 383)).